The sequence spans 320 residues: F-box protein At2g02240 (320 aa).

The region spanning threonine 58–phenylalanine 104 is the F-box domain.

The polypeptide is F-box protein At2g02240 (Arabidopsis thaliana (Mouse-ear cress)).